The primary structure comprises 188 residues: Surfactant protein C (188 aa).

The propeptide occupies 1–23 (MDMGSKEALMESPPDYSAAPRGR). Residues Cys28 and Cys29 are each lipidated (S-palmitoyl cysteine). Positions 59–188 (HMSQKHTEMV…LCGEVPLIYI (130 aa)) are excised as a propeptide. Residues 94 to 188 (FPIGSTGIVT…LCGEVPLIYI (95 aa)) enclose the BRICHOS domain. Cys121 and Cys180 form a disulfide bridge. The interval 144-164 (NPAEPPTQRGQDKGPAAGPAS) is disordered.

Its subcellular location is the secreted. It localises to the extracellular space. The protein localises to the surface film. In terms of biological role, pulmonary surfactant associated proteins promote alveolar stability by lowering the surface tension at the air-liquid interface in the peripheral air spaces. The polypeptide is Surfactant protein C (SFTPC) (Oryctolagus cuniculus (Rabbit)).